A 263-amino-acid chain; its full sequence is Acyl-[acyl-carrier-protein]--UDP-N-acetylglucosamine O-acyltransferase (263 aa).

Belongs to the transferase hexapeptide repeat family. LpxA subfamily. As to quaternary structure, homotrimer.

Its subcellular location is the cytoplasm. It carries out the reaction a (3R)-hydroxyacyl-[ACP] + UDP-N-acetyl-alpha-D-glucosamine = a UDP-3-O-[(3R)-3-hydroxyacyl]-N-acetyl-alpha-D-glucosamine + holo-[ACP]. It functions in the pathway glycolipid biosynthesis; lipid IV(A) biosynthesis; lipid IV(A) from (3R)-3-hydroxytetradecanoyl-[acyl-carrier-protein] and UDP-N-acetyl-alpha-D-glucosamine: step 1/6. In terms of biological role, involved in the biosynthesis of lipid A, a phosphorylated glycolipid that anchors the lipopolysaccharide to the outer membrane of the cell. In Campylobacter jejuni subsp. jejuni serotype O:6 (strain 81116 / NCTC 11828), this protein is Acyl-[acyl-carrier-protein]--UDP-N-acetylglucosamine O-acyltransferase.